Here is a 393-residue protein sequence, read N- to C-terminus: Chalcone synthase 1 (393 aa).

Cysteine 166 is a catalytic residue.

It belongs to the thiolase-like superfamily. Chalcone/stilbene synthases family.

It carries out the reaction (E)-4-coumaroyl-CoA + 3 malonyl-CoA + 3 H(+) = 2',4,4',6'-tetrahydroxychalcone + 3 CO2 + 4 CoA. Its pathway is secondary metabolite biosynthesis; flavonoid biosynthesis. Its function is as follows. The primary product of this enzyme is 4,2',4',6'-tetrahydroxychalcone (also termed naringenin-chalcone or chalcone) which can under specific conditions spontaneously isomerize into naringenin. The protein is Chalcone synthase 1 (CHS1) of Ruta graveolens (Common rue).